Reading from the N-terminus, the 35-residue chain is Photosystem II reaction center protein Psb30 (35 aa).

The helical transmembrane segment at 6–26 (VIVQLVFLALIITTGPVIIVY) threads the bilayer.

It belongs to the Psb30/Ycf12 family. As to quaternary structure, PSII is composed of 1 copy each of membrane proteins PsbA, PsbB, PsbC, PsbD, PsbE, PsbF, PsbH, PsbI, PsbJ, PsbK, PsbL, PsbM, PsbT, PsbY, PsbZ, Psb30/Ycf12, peripheral proteins of the oxygen-evolving complex and a large number of cofactors. It forms dimeric complexes.

The protein resides in the plastid. It is found in the chloroplast thylakoid membrane. A core subunit of photosystem II (PSII), probably helps stabilize the reaction center. The protein is Photosystem II reaction center protein Psb30 of Cyanidium caldarium (Red alga).